Here is a 247-residue protein sequence, read N- to C-terminus: 5'-nucleotidase SurE (247 aa).

Residues Asp8, Asp9, Ser39, and Asn91 each contribute to the a divalent metal cation site.

It belongs to the SurE nucleotidase family. A divalent metal cation is required as a cofactor.

The protein localises to the cytoplasm. It carries out the reaction a ribonucleoside 5'-phosphate + H2O = a ribonucleoside + phosphate. Nucleotidase that shows phosphatase activity on nucleoside 5'-monophosphates. This chain is 5'-nucleotidase SurE, found in Leptospira biflexa serovar Patoc (strain Patoc 1 / Ames).